The chain runs to 909 residues: ABC transporter B family member 1 (909 aa).

The tract at residues 1 to 36 (MTKKNFNDEENESLLETYNKQQQKQSISTTNRSDQK) is disordered. Over residues 14 to 36 (LLETYNKQQQKQSISTTNRSDQK) the composition is skewed to polar residues. Residues 85 to 105 (LFIQIVSLVILAGYLISINAL) form a helical membrane-spanning segment. Positions 125-134 (TDSGSVSPTS) are enriched in low complexity. Residues 125 to 147 (TDSGSVSPTSTPSPTPTPTPSPT) form a disordered region. Over residues 135 to 145 (TPSPTPTPTPS) the composition is skewed to pro residues. 8 helical membrane passes run 182-202 (FSTF…LLLI), 206-226 (SFIY…YNVI), 275-295 (IIIV…VLHI), 347-367 (LPII…SLAM), 392-412 (LALV…SWLF), 480-500 (VILL…IVPV), 572-592 (GVFS…IVYV), and 607-627 (LTSF…ISSL). One can recognise an ABC transmembrane type-1 domain in the interval 350-633 (ILAAMVALVF…ISSLMTDFLK (284 aa)). Positions 666-902 (IELKDVEFSY…TDGIYHNLVK (237 aa)) constitute an ABC transporter domain. ATP is bound at residue 701–708 (GPSGGGKS).

The protein belongs to the ABC transporter superfamily. ABCB family.

Its subcellular location is the membrane. This is ABC transporter B family member 1 (abcB1) from Dictyostelium discoideum (Social amoeba).